The chain runs to 138 residues: Acidic phospholipase A2 BmooPLA2 (138 aa).

Positions 1–16 (MRTLWIVAVLLLGVEG) are cleaved as a signal peptide. Disulfide bonds link cysteine 42–cysteine 131, cysteine 44–cysteine 60, cysteine 59–cysteine 111, cysteine 65–cysteine 138, cysteine 66–cysteine 104, cysteine 73–cysteine 97, and cysteine 91–cysteine 102. Ca(2+) contacts are provided by tyrosine 43, glycine 45, and glycine 47. The active site involves histidine 63. Residue aspartate 64 participates in Ca(2+) binding. Aspartate 105 is an active-site residue.

Belongs to the phospholipase A2 family. Group II subfamily. D49 sub-subfamily. Requires Ca(2+) as cofactor. Expressed by the venom gland.

The protein localises to the secreted. The catalysed reaction is a 1,2-diacyl-sn-glycero-3-phosphocholine + H2O = a 1-acyl-sn-glycero-3-phosphocholine + a fatty acid + H(+). Functionally, snake venom phospholipase A2 (PLA2) that inhibits ADP- and collagen-induced platelet aggregation, has edema-inducing, anti-coagulant activity, antibacterial activity, and cytotoxic activity. In vivo, has a hypotensive effect. PLA2 catalyzes the calcium-dependent hydrolysis of the 2-acyl groups in 3-sn-phosphoglycerides. The chain is Acidic phospholipase A2 BmooPLA2 from Bothrops moojeni (Lance-headed viper).